The following is a 592-amino-acid chain: Inactive metallocarboxypeptidase ecm14 (592 aa).

A signal peptide spans 1-22 (MYRQDHVFVVLCAVLLAGQVTA). A propeptide spanning residues 23 to 175 (VPAGTGINPH…AIYESRYPTR (153 aa)) is cleaved from the precursor. The region spanning 203–524 (HYQPFNVILQ…NSVLVLGHFL (322 aa)) is the Peptidase M14 domain. 2 residues coordinate Zn(2+): histidine 267 and glutamate 270. Substrate contacts are provided by residues 267–270 (HARE), arginine 325, and 342–343 (DR). Cysteine 336 and cysteine 359 are disulfide-bonded. A glycan (N-linked (GlcNAc...) asparagine) is linked at asparagine 383. Histidine 399 contacts Zn(2+). 400–401 (SY) serves as a coordination point for substrate. An N-linked (GlcNAc...) asparagine glycan is attached at asparagine 548.

Belongs to the peptidase M14 family. Requires Zn(2+) as cofactor.

Its subcellular location is the vacuole. The protein localises to the secreted. Inactive carboxypeptidase that may play a role in cell wall organization and biogenesis. This chain is Inactive metallocarboxypeptidase ecm14 (ecm14), found in Talaromyces stipitatus (strain ATCC 10500 / CBS 375.48 / QM 6759 / NRRL 1006) (Penicillium stipitatum).